We begin with the raw amino-acid sequence, 225 residues long: 3-dehydroquinate dehydratase (225 aa).

Residues 30-32 (EWR) and Arg-62 each bind 3-dehydroquinate. Catalysis depends on His-118, which acts as the Proton donor/acceptor. The Schiff-base intermediate with substrate role is filled by Lys-143. 3 residues coordinate 3-dehydroquinate: Arg-186, Ser-205, and Gln-209.

It belongs to the type-I 3-dehydroquinase family. As to quaternary structure, homodimer.

The enzyme catalyses 3-dehydroquinate = 3-dehydroshikimate + H2O. It functions in the pathway metabolic intermediate biosynthesis; chorismate biosynthesis; chorismate from D-erythrose 4-phosphate and phosphoenolpyruvate: step 3/7. Involved in the third step of the chorismate pathway, which leads to the biosynthesis of aromatic amino acids. Catalyzes the cis-dehydration of 3-dehydroquinate (DHQ) and introduces the first double bond of the aromatic ring to yield 3-dehydroshikimate. The chain is 3-dehydroquinate dehydratase from Streptococcus thermophilus (strain ATCC BAA-491 / LMD-9).